The following is a 285-amino-acid chain: Protein HEXIM1 (285 aa).

Disordered regions lie at residues 1–56 and 132–196; these read MSEV…QNPG and LMED…LQKD. A compositionally biased stretch (basic and acidic residues) spans 23 to 36; sequence GGWHHPVEREEHPV. The segment covering 168-180 has biased composition (acidic residues); sequence TDDDLEEEEDEAG. The stretch at 213–284 forms a coiled coil; sequence SKQDLIKEYL…QEGKQVAADS (72 aa).

Belongs to the HEXIM family. In terms of assembly, homooligomer and heterooligomer. Core component of the 7SK RNP complex.

It localises to the nucleus. It is found in the cytoplasm. Functionally, transcriptional regulator which functions as a general RNA polymerase II transcription inhibitor. Core component of the 7SK RNP complex: in cooperation with 7SK snRNA sequesters P-TEFb in a large inactive 7SK snRNP complex preventing RNA polymerase II phosphorylation and subsequent transcriptional elongation. Plays a role in the regulation of DNA virus-mediated innate immune response by assembling into the HDP-RNP complex, a complex that serves as a platform for IRF3 phosphorylation and subsequent innate immune response activation through the cGAS-STING pathway. The sequence is that of Protein HEXIM1 (hexim1) from Xenopus laevis (African clawed frog).